A 52-amino-acid chain; its full sequence is MSRDLVTIPRDVWNDMQGYIDSLERENDSLKNQLMEADEYVAELEEKLNGTS.

This is Gene 5.9 protein (5.9) from Enterobacteria phage T3 (Bacteriophage T3).